We begin with the raw amino-acid sequence, 311 residues long: Porphobilinogen deaminase (311 aa).

Position 242 is an S-(dipyrrolylmethanemethyl)cysteine (cysteine 242).

Belongs to the HMBS family. Monomer. It depends on dipyrromethane as a cofactor.

The enzyme catalyses 4 porphobilinogen + H2O = hydroxymethylbilane + 4 NH4(+). It participates in porphyrin-containing compound metabolism; protoporphyrin-IX biosynthesis; coproporphyrinogen-III from 5-aminolevulinate: step 2/4. In terms of biological role, tetrapolymerization of the monopyrrole PBG into the hydroxymethylbilane pre-uroporphyrinogen in several discrete steps. The protein is Porphobilinogen deaminase (hemC) of Vibrio cholerae serotype O1 (strain ATCC 39315 / El Tor Inaba N16961).